The primary structure comprises 356 residues: Alanine racemase, catabolic (356 aa).

The active-site Proton acceptor; specific for D-alanine is the Lys-35. Lys-35 is modified (N6-(pyridoxal phosphate)lysine). Arg-130 serves as a coordination point for substrate. The active-site Proton acceptor; specific for L-alanine is the Tyr-253. Met-301 contributes to the substrate binding site.

Belongs to the alanine racemase family. It depends on pyridoxal 5'-phosphate as a cofactor.

The catalysed reaction is L-alanine = D-alanine. Functionally, isomerizes L-alanine to D-alanine which is then oxidized to pyruvate by DadA. This is Alanine racemase, catabolic (dadX) from Salmonella typhi.